The following is a 209-amino-acid chain: Na(+)-translocating NADH-quinone reductase subunit D (209 aa).

5 helical membrane-spanning segments follow: residues 42–62, 72–92, 103–123, 131–151, and 178–198; these read LVMTIAVTLVTAFSSFFISLI, IIVQMAIIASLVIVVDQILQA, VFVGLIITNCIVMGRAEAYAM, FMDGIGNGLGYGVILVLVGFL, and NGLFLLAPSAFFIIGMLIWGL.

This sequence belongs to the NqrDE/RnfAE family. As to quaternary structure, composed of six subunits; NqrA, NqrB, NqrC, NqrD, NqrE and NqrF.

The protein localises to the cell inner membrane. It carries out the reaction a ubiquinone + n Na(+)(in) + NADH + H(+) = a ubiquinol + n Na(+)(out) + NAD(+). In terms of biological role, NQR complex catalyzes the reduction of ubiquinone-1 to ubiquinol by two successive reactions, coupled with the transport of Na(+) ions from the cytoplasm to the periplasm. NqrA to NqrE are probably involved in the second step, the conversion of ubisemiquinone to ubiquinol. The sequence is that of Na(+)-translocating NADH-quinone reductase subunit D from Photorhabdus laumondii subsp. laumondii (strain DSM 15139 / CIP 105565 / TT01) (Photorhabdus luminescens subsp. laumondii).